A 466-amino-acid chain; its full sequence is Ribulose bisphosphate carboxylase large chain (466 aa).

Residue K4 is modified to N6,N6,N6-trimethyllysine. N113 and T163 together coordinate substrate. K165 functions as the Proton acceptor in the catalytic mechanism. K167 contacts substrate. Residues K191, D193, and E194 each coordinate Mg(2+). K191 carries the post-translational modification N6-carboxylysine. Catalysis depends on H284, which acts as the Proton acceptor. Positions 285, 317, and 369 each coordinate substrate.

It belongs to the RuBisCO large chain family. Type I subfamily. As to quaternary structure, heterohexadecamer of 8 large chains and 8 small chains; disulfide-linked. The disulfide link is formed within the large subunit homodimers. It depends on Mg(2+) as a cofactor. The disulfide bond which can form in the large chain dimeric partners within the hexadecamer appears to be associated with oxidative stress and protein turnover.

Its subcellular location is the plastid. The protein localises to the chloroplast. The enzyme catalyses 2 (2R)-3-phosphoglycerate + 2 H(+) = D-ribulose 1,5-bisphosphate + CO2 + H2O. It carries out the reaction D-ribulose 1,5-bisphosphate + O2 = 2-phosphoglycolate + (2R)-3-phosphoglycerate + 2 H(+). Functionally, ruBisCO catalyzes two reactions: the carboxylation of D-ribulose 1,5-bisphosphate, the primary event in carbon dioxide fixation, as well as the oxidative fragmentation of the pentose substrate in the photorespiration process. Both reactions occur simultaneously and in competition at the same active site. This chain is Ribulose bisphosphate carboxylase large chain, found in Justicia odora (Water willow).